Reading from the N-terminus, the 418-residue chain is Alditol oxidase (418 aa).

An FAD-binding PCMH-type domain is found at 13 to 179 (ITYTAKELLR…TSLTLDLEPA (167 aa)). FAD-binding positions include 41-47 (VLGSGHS), S106, S111, G114, 118-121 (TGTH), and V169. At H46 the chain carries Pros-8alpha-FAD histidine. S106 serves as a coordination point for D-sorbitol. Position 106 (S106) interacts with xylitol. D-sorbitol is bound by residues E320, R322, and T345. Residues E320, R322, and T345 each contribute to the xylitol site. R322 contributes to the FAD binding site. H372 contributes to the FAD binding site. Residue K375 participates in D-sorbitol binding. Position 375 (K375) interacts with xylitol.

This sequence belongs to the oxygen-dependent FAD-linked oxidoreductase family. Monomer. FAD serves as cofactor.

The catalysed reaction is an alditol + O2 = an aldose + H2O2. It catalyses the reaction xylitol + O2 = D-xylose + H2O2. It carries out the reaction D-sorbitol + O2 = D-glucose + H2O2. Functionally, oxidase that performs selective oxidation of the terminal primary hydroxyl group of several alditols, with a reduction of O2 to H2O2. Shows highest activity on xylitol and D-sorbitol, and a poor efficiency with D-mannitol and L-threitol. The sequence is that of Alditol oxidase (xyoA) from Streptomyces coelicolor (strain ATCC BAA-471 / A3(2) / M145).